Reading from the N-terminus, the 241-residue chain is B-cell receptor-associated protein 29 (241 aa).

The Lumenal portion of the chain corresponds to 1–6 (MTLQWA). The chain crosses the membrane as a helical span at residues 7–27 (AVATFLYAEIGLILIFCLPFI). Topologically, residues 28–43 (PPQRWQKIFSFNVWGK) are cytoplasmic. Residues 44-64 (IATFWNKAFLTIIILLIVLFL) form a helical membrane-spanning segment. At 65–103 (DAVREVRKYSSVHTIEKSSTSRPDAYEHTQMKLFRSQRN) the chain is on the lumenal side. A helical transmembrane segment spans residues 104 to 124 (LYISGFSLFFWLVLRRLVTLI). Over 125-241 (TQLAKELSNK…RLERGNKKRL (117 aa)) the chain is Cytoplasmic. Residues 166–233 (GKDEECVLEA…KEHSELQDRL (68 aa)) are a coiled coil. The interval 198 to 223 (LSKAQNDVMEMKMQSERLSKEYDQLL) is disordered. Positions 206–223 (MEMKMQSERLSKEYDQLL) are enriched in basic and acidic residues. The short motif at 238 to 241 (KKRL) is the Di-lysine motif element.

Belongs to the BCAP29/BCAP31 family. In terms of assembly, homodimer. Heterodimer with BCAP31. Binds CASP8 (isoform 9) as a complex containing BCAP31, BCAP29, BCL2 and/or BCL2L1. Interacts with VAMP3, VAMP1 and membrane IgD immunoglobulins. May interact with ACTG1 and non-muscle myosin II.

The protein resides in the endoplasmic reticulum membrane. May play a role in anterograde transport of membrane proteins from the endoplasmic reticulum to the Golgi. May be involved in CASP8-mediated apoptosis. This chain is B-cell receptor-associated protein 29 (BCAP29), found in Homo sapiens (Human).